The chain runs to 310 residues: Olfactory receptor 5P1 (310 aa).

Residues 1-25 (MEPGNHTAVTKFILLGLTDDPTLCV) are Extracellular-facing. N-linked (GlcNAc...) asparagine glycosylation occurs at Asn-5. A helical transmembrane segment spans residues 26–46 (IFFVFFLGIYIVTLVGNISII). At 47 to 54 (NLVRSCPQ) the chain is on the cytoplasmic side. The chain crosses the membrane as a helical span at residues 55–75 (LQTPMYMFLSHLAFVDIGYST). Topologically, residues 76–99 (SVTPIMLIGFIVHETGLPVHACEA) are extracellular. Cysteines 97 and 189 form a disulfide. The chain crosses the membrane as a helical span at residues 100 to 120 (QLCSVVTFGTAECFLLAAMAY). Over 121-133 (DRYVAICSPLLYS) the chain is Cytoplasmic. The helical transmembrane segment at 134 to 154 (THMSSQICLLLVGASYVGGCV) threads the bilayer. The Extracellular portion of the chain corresponds to 155-196 (NAWTFTGCLLSLSFCGPNKIDHFFCDFSPLLKLSCSDVSIIG). A helical membrane pass occupies residues 197-217 (IIPSISAGSIIVVTVFVISVS). Residues 218–237 (YIYILITILKMRSTEGRHKA) are Cytoplasmic-facing. A helical membrane pass occupies residues 238-258 (FSTCTSHLTAVTLYYGTITFI). At 259-271 (YVMPKSSYSTKQN) the chain is on the extracellular side. Residues 272–292 (RVVSLFYTVVIPMLNPLIYSL) traverse the membrane as a helical segment. Over 293 to 310 (RNRDVKEALRKATLRIYS) the chain is Cytoplasmic.

It belongs to the G-protein coupled receptor 1 family.

It is found in the cell membrane. Functionally, potential odorant receptor. This chain is Olfactory receptor 5P1, found in Mus musculus (Mouse).